The following is a 547-amino-acid chain: RNA polymerase sigma factor sigF, chloroplastic (547 aa).

Over residues Met-1–Lys-17 the composition is skewed to polar residues. 2 disordered regions span residues Met-1–Ser-28 and Phe-54–Thr-79. The N-terminal 55 residues, Met-1–Pro-55, are a transit peptide targeting the chloroplast. Positions Glu-62–Thr-79 are enriched in basic and acidic residues. 6 positions are modified to phosphoserine; by CK2: Ser-94, Ser-95, Ser-174, Ser-176, Ser-177, and Ser-180. Positions Ala-163–Lys-226 are disordered. Positions Ser-172 to Leu-181 are enriched in low complexity. Phosphothreonine; by CK2 is present on Thr-249. Residues Asp-335–Val-348 carry the Polymerase core binding motif. Residues Leu-505–Ser-524 constitute a DNA-binding region (H-T-H motif).

It belongs to the sigma-70 factor family. Interacts (via N-terminus) with DG1 (via C-terminus). In terms of processing, phosphorylated to acquire sigma activity; site-specific phosphorylation regulates promoter affinity. Phosphorylation at Ser-174 by chloroplastic CK2 requires prior phosphorylation at Ser-177. Phosphorylation at either Ser-94, Ser-95 or Ser-174 is required for sigma activation. As to expression, expressed in seedling, accumulating progressively. Present in leaves but not in roots.

The protein localises to the plastid. Its subcellular location is the chloroplast. In terms of biological role, sigma factors are initiation factors that promote the attachment of plastid-encoded RNA polymerase (PEP) to specific initiation sites and are then released. Regulates transcription in chloroplast in a DG1-dependent manner. Involved in light-dependent chloroplast development. Required during early plant development and primary leaf formation. This chain is RNA polymerase sigma factor sigF, chloroplastic (SIGF), found in Arabidopsis thaliana (Mouse-ear cress).